The following is an 893-amino-acid chain: Dolichyl-phosphate-mannose--protein mannosyltransferase 1 (893 aa).

7 helical membrane-spanning segments follow: residues 29–49 (FSFL…CVRA), 77–97 (LLMD…AALT), 124–144 (LFTC…VYFP), 147–167 (SKTA…LITM), 170–190 (YIMI…YWSV), 224–244 (AMFT…NLLG), and 258–278 (FSYI…VFAV). The 55-residue stretch at 310–364 (FADVAYGSLVTIRNAIPEHGYLHSSELLYPEGTEQQIISLVDEPNQNALWIIEHE) folds into the MIR 1 domain. N370 carries an N-linked (GlcNAc...) asparagine glycan. 2 consecutive MIR domains span residues 374 to 433 (IELL…IQIL) and 443 to 499 (NGTV…IESN). N443 is a glycosylation site (N-linked (GlcNAc...) asparagine). The residue at position 451 (T451) is a Phosphothreonine. 3 helical membrane passes run 573 to 593 (FVWY…IFCL), 610 to 630 (YNYN…PYIL), and 643 to 663 (ALYF…NAVF). An N-linked (GlcNAc...) asparagine glycan is attached at N665. Residues 671-691 (ALSVIIMALMFLVYRLYSPFT) form a helical membrane-spanning segment. The N-linked (GlcNAc...) asparagine glycan is linked to N720. The disordered stretch occupies residues 785–893 (KAEQEAREAA…VAESAQARVE (109 aa)). The span at 786–806 (AEQEAREAAEKAASEAAERSS) shows a compositional bias: basic and acidic residues. Low complexity-rich tracts occupy residues 807-823 (SEAA…AASV) and 854-864 (MEAAALNNAAE). The segment covering 868–878 (VVGSSPESVAS) has biased composition (polar residues).

Belongs to the glycosyltransferase 39 family.

The protein localises to the endoplasmic reticulum membrane. It localises to the nucleus membrane. It carries out the reaction a di-trans,poly-cis-dolichyl beta-D-mannosyl phosphate + L-seryl-[protein] = 3-O-(alpha-D-mannosyl)-L-seryl-[protein] + a di-trans,poly-cis-dolichyl phosphate + H(+). The catalysed reaction is a di-trans,poly-cis-dolichyl beta-D-mannosyl phosphate + L-threonyl-[protein] = 3-O-(alpha-D-mannosyl)-L-threonyl-[protein] + a di-trans,poly-cis-dolichyl phosphate + H(+). It participates in protein modification; protein glycosylation. Its function is as follows. Transfers mannose from Dol-P-mannose to Ser or Thr residues on proteins. Required for normal cell growth and septum formation. Shown to actively O-mannosylate wsc1. The polypeptide is Dolichyl-phosphate-mannose--protein mannosyltransferase 1 (ogm1) (Schizosaccharomyces pombe (strain 972 / ATCC 24843) (Fission yeast)).